The chain runs to 654 residues: MLSVPHLDRDFDYLVPAEHSDDAQPGVRVRVRFHGRLVDGFVLERRSDSDHHGKLGWLDRVVSPEPVLTTEIRRLVDAVAARYAGTRQDVLRLAVPARHARVEREITTAPGRPVVAPVDPSGWAAYGRGRQFLAALADSRAARAVWQALPGELWADRFAEAAAQTVRAGRTVLAIVPDQRDLDTLWQAATALVDEHSVVALSAGLGPEARYRRWLAALRGSARLVIGTRSAVFAPLSELGLVMVWADADDSLAEPRAPYPHAREVAMLRAHQARCAALIGGYARTAEAHALVRSGWAHDVVAPRPEVRARSPRVVALDDSGYDDARDPAARTARLPSYRWRRGSALQSGAPVLVQVPRRGYIPSLACGRCRAIARCRSCTGPLSLQGAGSPGAVCRWCGRVDPTLRCVRCGSDVVRAVVVGARRTAEELGRAFPGTAVITSAGDTLVPQLDAGPALVVATPGAEPRAPGGYGAALLLDSWALLGRQDLRAAEDALWRWMTAAALVRPRGAGGVVTVVAESSIPTVQSLIRWDPVGHAEAELAARTEVGLPPSVHIAALDGPAGTVTALLEAARLPDPDRLQADLLGPVDLPPGVRRPAGIPADAPVIRMLLRVCREQGLELAASLRRGIGVLSARQTRQTRSLVRVQIDPLHIG.

Residues cysteine 367, cysteine 370, cysteine 376, cysteine 379, cysteine 395, cysteine 398, cysteine 407, and cysteine 410 each contribute to the Zn(2+) site.

It belongs to the helicase family. PriA subfamily. In terms of assembly, component of the replication restart primosome. Requires Zn(2+) as cofactor.

Functionally, initiates the restart of stalled replication forks, which reloads the replicative helicase on sites other than the origin of replication. Recognizes and binds to abandoned replication forks and remodels them to uncover a helicase loading site. Promotes assembly of the primosome at these replication forks. The chain is Probable replication restart protein PriA from Mycobacterium tuberculosis (strain CDC 1551 / Oshkosh).